Here is a 620-residue protein sequence, read N- to C-terminus: Lamin-B2 (620 aa).

The disordered stretch occupies residues 1 to 38 (MSPPSPGRRREQRRPRAAATMATPLPGRAGGPATPLSP). Residues 1 to 48 (MSPPSPGRRREQRRPRAAATMATPLPGRAGGPATPLSPTRLSRLQEKE) form a head region. Phosphothreonine occurs at positions 23 and 34. Phosphoserine is present on Ser37. One can recognise an IF rod domain in the interval 46–402 (EKEELRELND…KLLEGEEERL (357 aa)). Residues 49–83 (ELRELNDRLAHYIDRVRALELENDRLLLKISEKEE) form a coil 1A region. A Glycyl lysine isopeptide (Lys-Gly) (interchain with G-Cter in SUMO2) cross-link involves residue Lys77. The residue at position 81 (Lys81) is an N6-acetyllysine; alternate. Lys81 is covalently cross-linked (Glycyl lysine isopeptide (Lys-Gly) (interchain with G-Cter in SUMO2); alternate). The linker 1 stretch occupies residues 84 to 95 (VTTREVSGIKAL). The tract at residues 96 to 229 (YESELADARR…DFRKSVFEEE (134 aa)) is coil 1B. Glycyl lysine isopeptide (Lys-Gly) (interchain with G-Cter in SUMO2) cross-links involve residues Lys195 and Lys255. Residues 230 to 256 (VRETRRRHERRLVEVDSSRQQEYDFKM) are linker 2. A coil 2 region spans residues 257-400 (AQALEELRSQ…YRKLLEGEEE (144 aa)). Ser316 and Ser407 each carry phosphoserine. The segment at 399–464 (EERLKLSPSP…GTGGSGGFHL (66 aa)) is disordered. The tract at residues 401-620 (RLKLSPSPSS…RTTSRGCYVM (220 aa)) is tail. Residues 404-431 (LSPSPSSRVTVSRATSSSSGSLSATGRL) are compositionally biased toward low complexity. Thr413 is a glycosylation site (O-linked (GlcNAc) threonine). Residues Ser420, Ser422, Ser424, and Ser426 each carry the phosphoserine modification. Arg433 is modified (omega-N-methylarginine). Residues 435–440 (KRKRLE) carry the Nuclear localization signal motif. A compositionally biased stretch (low complexity) spans 444 to 453 (PLGSGPSVLG). The LTD domain occupies 462 to 579 (FHLAQQASAS…EEVAMRTVKK (118 aa)). Residue Lys489 forms a Glycyl lysine isopeptide (Lys-Gly) (interchain with G-Cter in SUMO2) linkage. Ser497 carries the phosphoserine modification. The interval 581–620 (SVMRENENGEEEEEEAEFGEEDLFHQQGDPRTTSRGCYVM) is disordered. Acidic residues predominate over residues 588–601 (NGEEEEEEAEFGEE). A compositionally biased stretch (polar residues) spans 609-620 (DPRTTSRGCYVM). Cys617 bears the Cysteine methyl ester mark. Residue Cys617 is the site of S-farnesyl cysteine attachment. A propeptide spans 618–620 (YVM) (removed in mature form).

It belongs to the intermediate filament family. As to quaternary structure, dimer. Lamin dimers then assemble into dimeric head-to-tail polymers. Ultimately, two head-to-tail polymers assemble laterally into a protofilament with a uniformly shaped rod of 3.5 nm in diameter. Interacts with TMEM43. Post-translationally, B-type lamins undergo a series of modifications, such as farnesylation and phosphorylation. Increased phosphorylation of the lamins occurs before envelope disintegration and probably plays a role in regulating lamin associations. In terms of processing, phosphorylation plays a key role in lamin organization, subcellular localization and nuclear envelope disintegration. Phosphorylation by CDK1 at Ser-37 and Ser-407 at the onset of mitosis drives lamin disassembly and nuclear envelope breakdown.

It is found in the nucleus lamina. Lamins are intermediate filament proteins that assemble into a filamentous meshwork, and which constitute the major components of the nuclear lamina, a fibrous layer on the nucleoplasmic side of the inner nuclear membrane. Lamins provide a framework for the nuclear envelope, bridging the nuclear envelope and chromatin, thereby playing an important role in nuclear assembly, chromatin organization, nuclear membrane and telomere dynamics. The structural integrity of the lamina is strictly controlled by the cell cycle, as seen by the disintegration and formation of the nuclear envelope in prophase and telophase, respectively. This is Lamin-B2 (LMNB2) from Homo sapiens (Human).